We begin with the raw amino-acid sequence, 482 residues long: Caspase-8 (482 aa).

The propeptide occupies 1–218 (MDFHSCLYDI…DMWDSPGEQE (218 aa)). 2 DED domains span residues 2-80 (DFHS…RVLK) and 100-177 (AYRV…RIDD). A phosphoserine mark is found at S188 and S213. H319 is a catalytic residue. Y336 carries the phosphotyrosine modification. C362 is an active-site residue. The propeptide occupies 379–388 (LEQEHVLEED). S390 is modified (phosphoserine; by CDK1).

The protein belongs to the peptidase C14A family. As to quaternary structure, heterotetramer that consists of two anti-parallel arranged heterodimers, each one formed by a 18 kDa (p18) and a 10 kDa (p10) subunit. Component of the death-induced signaling complex (DISC) composed of cell surface receptor FAS/CD95 or TNFRSF1A, adapter protein FADD and the CASP8 protease; recruitment of CASP8 to the complex is required for processing of CASP8 into the p18 and p10 subunits. Component of the AIM2 PANoptosome complex, a multiprotein complex that drives inflammatory cell death (PANoptosis). Interacts with CFLAR and PEA15. Interacts with RFFL and RNF34; negatively regulate CASP8 through proteasomal degradation. Interacts with TNFAIP8L2. Interacts with CASP8AP2. Interacts with NOL3; decreases CASP8 activity in a mitochondria localization- and phosphorylation-dependent manner and this interaction is dissociated by calcium. Interacts with UBR2. Interacts with RIPK1. Interacts with stimulated TNFRSF10B; this interaction is followed by CASP8 proteolytic cleavage and activation. Generation of the subunits requires association with the death-inducing signaling complex (DISC), whereas additional processing is likely due to the autocatalytic activity of the activated protease. GZMB and CASP10 can be involved in these processing events. In terms of processing, phosphorylation on Ser-389 during mitosis by CDK1 inhibits activation by proteolysis and prevents apoptosis. This phosphorylation occurs in cancer cell lines, as well as in primary breast tissues and lymphocytes.

The protein resides in the cytoplasm. It localises to the nucleus. It catalyses the reaction Strict requirement for Asp at position P1 and has a preferred cleavage sequence of (Leu/Asp/Val)-Glu-Thr-Asp-|-(Gly/Ser/Ala).. CASP8 activity is restricted by RIPK1. Its function is as follows. Thiol protease that plays a key role in programmed cell death by acting as a molecular switch for apoptosis, necroptosis and pyroptosis, and is required to prevent tissue damage during embryonic development and adulthood. Initiator protease that induces extrinsic apoptosis by mediating cleavage and activation of effector caspases responsible for FAS/CD95-mediated and TNFRSF1A-induced cell death. Cleaves and activates effector caspases CASP3, CASP4, CASP6, CASP7, CASP9 and CASP10. Binding to the adapter molecule FADD recruits it to either receptor FAS/CD95 or TNFRSF1A. The resulting aggregate called the death-inducing signaling complex (DISC) performs CASP8 proteolytic activation. The active dimeric enzyme is then liberated from the DISC and free to activate downstream apoptotic proteases. Proteolytic fragments of the N-terminal propeptide (termed CAP3, CAP5 and CAP6) are likely retained in the DISC. In addition to extrinsic apoptosis, also acts as a negative regulator of necroptosis: acts by cleaving RIPK1 at 'Asp-325', which is crucial to inhibit RIPK1 kinase activity, limiting TNF-induced apoptosis, necroptosis and inflammatory response. Also able to initiate pyroptosis by mediating cleavage and activation of gasdermin-C and -D (GSDMC and GSDMD, respectively): gasdermin cleavage promotes release of the N-terminal moiety that binds to membranes and forms pores, triggering pyroptosis. Initiates pyroptosis following inactivation of MAP3K7/TAK1. Also acts as a regulator of innate immunity by mediating cleavage and inactivation of N4BP1 downstream of TLR3 or TLR4, thereby promoting cytokine production. May participate in the Granzyme B (GZMB) cell death pathways. Cleaves PARP1 and PARP2. The protein is Caspase-8 of Rattus norvegicus (Rat).